A 1160-amino-acid chain; its full sequence is DNA polymerase III subunit alpha (1160 aa).

It belongs to the DNA polymerase type-C family. DnaE subfamily. The DNA polymerase III holoenzyme complex contains at least 10 different subunits organized into 3 functionally essential subassemblies: the Pol III core, the beta sliding clamp processivity factor and the clamp-loading complex. The Pol III core (subunits alpha, epsilon and theta) contains the polymerase and the 3'-5' exonuclease proofreading activities. The polymerase is tethered to the template via the dimeric beta sliding clamp processivity factor. The clamp loader (also called gamma complex) assembles the beta sliding clamp onto the primed template and plays a central role in the organization and communication at the replication fork. The clamp-loading complex contains delta, delta', psi and chi, and 3 copies of either or both of two different DnaX proteins, gamma and tau. The DNA replisome complex has a single clamp loader (3 tau and 1 each of delta, delta', psi and chi subunits) which binds 3 Pol III cores (1 core on the leading strand and 2 on the lagging strand) each with a beta sliding clamp dimer. Additional proteins in the replisome are other copies of gamma, psi and chi, Ssb, DNA helicase and RNA primase. Interacts with the beta sliding-clamp subunit via the peptide Gln-Ala-Asp-Met-Phe (residues 920-924).

The protein resides in the cytoplasm. The enzyme catalyses DNA(n) + a 2'-deoxyribonucleoside 5'-triphosphate = DNA(n+1) + diphosphate. Functionally, DNA polymerase III is a complex, multichain enzyme responsible for most of the replicative synthesis in bacteria. This DNA polymerase also exhibits 3' to 5' exonuclease activity. The alpha chain is the DNA polymerase catalytic subunit. It is tethered to replicating DNA by the beta sliding clamp (dnaN), which confers extremely high processivity to the catalytic subunit, copying a 5.4 kb genome in 11 seconds, a speed of at least 500 nucleotides/second at 30 degrees Celsius. The chain is DNA polymerase III subunit alpha (dnaE) from Escherichia coli (strain K12).